A 461-amino-acid chain; its full sequence is METLFNGTLALTGRDQETTGFAWWAGNARLINLSGKLLGAHVAHAGLIVFWAGAMNLFEVAHFVPEKPMYEQGLILLPHLATLGWGVGPGGEVIDTFPYFVSGVLHLISSAVLGFGGIYHALLGPETLEESFPFFGYVWKDRNKMTTILGIHLILLGIGAFLLVFKASYFGGIYDTWAPGGGDVRKITNLTLSPSIIFGYLLKSPFGGEGWIVSVDDLEDIIGGHVWLGSICILGGIWHILTKPFAWARRALVWSGEAYLSYSLAALSVFGFIACCFVWFNNTAYPSEFYGPTGPEASQAQAFTFLVRDQRLGANVGSAQGPTGLGKYLMRSPTGEVIFGGETMRFWDLRAPWLEPLRGPNGLDLSRLKKDIQPWQERRSAEYMTHAPLGSLNSVGGVATEINAVNYVSPRSWLATSHFVLGFFLFVGHLWHAGRARAAAAGFEKGIDRDFEPVLSMTPLN.

Positions 1–2 are excised as a propeptide; that stretch reads ME. Thr-3 carries the post-translational modification N-acetylthreonine. Position 3 is a phosphothreonine (Thr-3). 5 helical membrane passes run 57–81, 122–143, 166–188, 243–263, and 279–300; these read LFEVAHFVPEKPMYEQGLILLPHLA, LLGPETLEESFPFFGYVWKDRN, KASYFGGIYDTWAPGGGDVRKIT, KPFAWARRALVWSGEAYLSYS, and WFNNTAYPSEFYGPTGPEASQA. Position 355 (Glu-355) interacts with [CaMn4O5] cluster. Residues 435 to 459 form a helical membrane-spanning segment; sequence RARAAAAGFEKGIDRDFEPVLSMTP.

This sequence belongs to the PsbB/PsbC family. PsbC subfamily. In terms of assembly, PSII is composed of 1 copy each of membrane proteins PsbA, PsbB, PsbC, PsbD, PsbE, PsbF, PsbH, PsbI, PsbJ, PsbK, PsbL, PsbM, PsbT, PsbX, PsbY, PsbZ, Psb30/Ycf12, at least 3 peripheral proteins of the oxygen-evolving complex and a large number of cofactors. It forms dimeric complexes. Binds multiple chlorophylls and provides some of the ligands for the Ca-4Mn-5O cluster of the oxygen-evolving complex. It may also provide a ligand for a Cl- that is required for oxygen evolution. PSII binds additional chlorophylls, carotenoids and specific lipids. serves as cofactor.

It is found in the plastid. Its subcellular location is the chloroplast thylakoid membrane. Its function is as follows. One of the components of the core complex of photosystem II (PSII). It binds chlorophyll and helps catalyze the primary light-induced photochemical processes of PSII. PSII is a light-driven water:plastoquinone oxidoreductase, using light energy to abstract electrons from H(2)O, generating O(2) and a proton gradient subsequently used for ATP formation. This chain is Photosystem II CP43 reaction center protein, found in Lotus japonicus (Lotus corniculatus var. japonicus).